The following is a 345-amino-acid chain: Probable G-protein coupled receptor 139 (345 aa).

The Extracellular portion of the chain corresponds to 1 to 21 (MEHTHAHLAANSSACGLGFVP). Residue Asn11 is glycosylated (N-linked (GlcNAc...) asparagine). Residues 22 to 42 (VVYYSFLLCLGLPANILTVII) form a helical membrane-spanning segment. Residues 43-57 (LSQLVARRQKSSYNY) are Cytoplasmic-facing. Residues 58–78 (LLALAAADILVLFFIVFVDFL) traverse the membrane as a helical segment. At 79–94 (LEDFILTMQMPLIPDK) the chain is on the extracellular side. The chain crosses the membrane as a helical span at residues 95-115 (IIEVLEFSSIHTSIWITVPLT). The Cytoplasmic segment spans residues 116-140 (VDRYIAVCHPLKYHTVSYPARTRKV). The helical transmembrane segment at 141–161 (ILSVYITCFLTSIPYYWWPNI) threads the bilayer. Residues 162–173 (WTEDYISTSMHH) are Extracellular-facing. The chain crosses the membrane as a helical span at residues 174–194 (VLVWIHCFTVYLVPCSIFFIL). Topologically, residues 195–220 (NSIIVYKLRRKSNFRLRGYSTGKTTA) are cytoplasmic. The chain crosses the membrane as a helical span at residues 221-241 (ILFTITSIFATLWAPRIIMIL). Residues 242-260 (YHLYGAPIQNPWLVHIMLD) lie on the Extracellular side of the membrane. Residues 261–281 (VANMLALLNTAINFFLYCFIS) form a helical membrane-spanning segment. The Cytoplasmic portion of the chain corresponds to 282–345 (KRFRTMAAAT…KHGKPIKVSP (64 aa)).

It belongs to the G-protein coupled receptor 1 family. In terms of tissue distribution, expressed almost exclusively in the brain. Abundantly expressed in the ventrolateral region of caudate putamen, the habenular nucleus, the zona incerta, and the medial mammillary nucleus.

It is found in the cell membrane. Functionally, orphan receptor. Seems to act through a G(q/11)-mediated pathway. The sequence is that of Probable G-protein coupled receptor 139 (Gpr139) from Mus musculus (Mouse).